A 193-amino-acid chain; its full sequence is Adenine phosphoribosyltransferase (193 aa).

This sequence belongs to the purine/pyrimidine phosphoribosyltransferase family. As to quaternary structure, homodimer.

It is found in the cytoplasm. The catalysed reaction is AMP + diphosphate = 5-phospho-alpha-D-ribose 1-diphosphate + adenine. It participates in purine metabolism; AMP biosynthesis via salvage pathway; AMP from adenine: step 1/1. Catalyzes a salvage reaction resulting in the formation of AMP, that is energically less costly than de novo synthesis. In Bifidobacterium animalis subsp. lactis (strain AD011), this protein is Adenine phosphoribosyltransferase.